Consider the following 259-residue polypeptide: MDKQTLVIKLGGALIENDEALTALFGTLKTFLDEQHRPLVLVHGGGCLVDDLLKGLGLSSTKKNGLRVTPFEQIPFIAGALAGTANKQMMAKAIATGIPAVGLCLADGGLCQVTQLDPDLGAVGDCQPGNPALVTGILAQGFLPVVSSIGITADGQLMNVNADQAATAIAEALGADLVMLSDVSGILDGKGKLVPQLNKATALDLMEKGVISDGMAVKVKAALHAAETLGKPVCVASWRYPDQLLKLLAGGAVGTQVTL.

Residues 45–46 (GG), Arg67, and Asn159 each bind substrate.

It belongs to the acetylglutamate kinase family. ArgB subfamily.

The protein localises to the cytoplasm. It carries out the reaction N-acetyl-L-glutamate + ATP = N-acetyl-L-glutamyl 5-phosphate + ADP. It functions in the pathway amino-acid biosynthesis; L-arginine biosynthesis; N(2)-acetyl-L-ornithine from L-glutamate: step 2/4. Catalyzes the ATP-dependent phosphorylation of N-acetyl-L-glutamate. The chain is Acetylglutamate kinase from Aeromonas salmonicida (strain A449).